Reading from the N-terminus, the 583-residue chain is Arginine--tRNA ligase (583 aa).

A 'HIGH' region motif is present at residues 123–133 (PNIAKEMHVGH).

This sequence belongs to the class-I aminoacyl-tRNA synthetase family. As to quaternary structure, monomer.

The protein localises to the cytoplasm. The catalysed reaction is tRNA(Arg) + L-arginine + ATP = L-arginyl-tRNA(Arg) + AMP + diphosphate. This Blochmanniella floridana protein is Arginine--tRNA ligase.